We begin with the raw amino-acid sequence, 152 residues long: Arginine repressor (152 aa).

Belongs to the ArgR family.

It localises to the cytoplasm. It functions in the pathway amino-acid biosynthesis; L-arginine biosynthesis [regulation]. Functionally, regulates arginine biosynthesis genes. This chain is Arginine repressor, found in Caldicellulosiruptor saccharolyticus (strain ATCC 43494 / DSM 8903 / Tp8T 6331).